Reading from the N-terminus, the 683-residue chain is Eukaryotic translation initiation factor 3 subunit B (683 aa).

The segment at 1-25 is disordered; it reads MAKKKGEEQDFEEEPNFDDPEGFVD. Over residues 9–25 the composition is skewed to acidic residues; sequence QDFEEEPNFDDPEGFVD. The RRM domain occupies 49 to 133; the sequence is NVIVVDNIPV…YTLLVNRFAD (85 aa). 6 WD repeats span residues 199–238, 240–279, 283–321, 324–359, 435–477, and 522–567; these read KRERFTDTYVKWSPKGTYIVTFHKQGVVVWGGSSFVKVNK, AHSNAQFVDISPCEQYLVTYGPNGQKIVIWDIRTGAEKRT, DGMSNASMLRWSHDDRYVARLVDSQIQIYDTTTFFLLDM, IRVEGIRNFSWSPTDNIIAYWVAEEVDVPAKVTLMA, EVKE…EPVL, and GDHY…KRVN. A coiled-coil region spans residues 611 to 638; the sequence is MTRASKELIEKRAKLREQFTEYRSKRVK.

It belongs to the eIF-3 subunit B family. As to quaternary structure, component of the eukaryotic translation initiation factor 3 (eIF-3) complex.

The protein localises to the cytoplasm. Functionally, RNA-binding component of the eukaryotic translation initiation factor 3 (eIF-3) complex, which is involved in protein synthesis of a specialized repertoire of mRNAs and, together with other initiation factors, stimulates binding of mRNA and methionyl-tRNAi to the 40S ribosome. The eIF-3 complex specifically targets and initiates translation of a subset of mRNAs involved in cell proliferation. The sequence is that of Eukaryotic translation initiation factor 3 subunit B from Anopheles gambiae (African malaria mosquito).